Consider the following 875-residue polypeptide: Protein SEY1 (875 aa).

Residues methionine 1–glutamine 749 lie on the Cytoplasmic side of the membrane. One can recognise a GB1/RHD3-type G domain in the interval glycine 49 to alanine 307. Glycine 59–serine 66 provides a ligand contact to GTP. Residues serine 482 to glutamate 506 are a coiled coil. Residues leucine 676–aspartate 704 form a disordered region. The span at alanine 690–aspartate 704 shows a compositional bias: acidic residues. A helical membrane pass occupies residues valine 750–leucine 770. Residues arginine 771–proline 773 lie on the Lumenal side of the membrane. The helical transmembrane segment at alanine 774–leucine 794 threads the bilayer. The Cytoplasmic portion of the chain corresponds to tryptophan 795 to phenylalanine 875. The segment at methionine 831–phenylalanine 875 is disordered. Basic and acidic residues predominate over residues alanine 839–aspartate 864. The span at valine 865–phenylalanine 875 shows a compositional bias: acidic residues.

It belongs to the TRAFAC class dynamin-like GTPase superfamily. GB1/RHD3 GTPase family. RHD3 subfamily.

It is found in the endoplasmic reticulum membrane. Its function is as follows. Cooperates with the reticulon proteins and tubule-shaping DP1 family proteins to generate and maintain the structure of the tubular endoplasmic reticulum network. Has GTPase activity, which is required for its function in ER organization. The protein is Protein SEY1 of Ajellomyces dermatitidis (strain ER-3 / ATCC MYA-2586) (Blastomyces dermatitidis).